The chain runs to 110 residues: Small ribosomal subunit protein bS16 (110 aa).

The interval 87–110 (ARNNPEKAVPRKERKAAAEAAAKK) is disordered.

Belongs to the bacterial ribosomal protein bS16 family.

This chain is Small ribosomal subunit protein bS16, found in Rhodopseudomonas palustris (strain BisA53).